Reading from the N-terminus, the 338-residue chain is 3 beta-hydroxysteroid dehydrogenase type 7 (338 aa).

Catalysis depends on Tyr159, which acts as the Proton acceptor. Lys163 is an NAD(+) binding site. The next 2 membrane-spanning stretches (helical) occupy residues 258 to 278 (LLPYWLLVLLTALNALLQWLL) and 280 to 300 (PLVLYTPLLNPYTLAVANTTF).

Belongs to the 3-beta-HSD family. In terms of tissue distribution, high levels in liver and lung, moderate levels in spleen, brain, heart, kidney, jejunum and testis. Up-regulated in 3Y1 cells upon growth arrest.

Its subcellular location is the endoplasmic reticulum membrane. It catalyses the reaction 7alpha-hydroxycholesterol + NAD(+) = 7alpha-hydroxycholest-4-en-3-one + NADH + H(+). It carries out the reaction 7alpha,25-dihydroxycholesterol + NAD(+) = 7alpha,25-dihydroxy-4-cholesten-3-one + NADH + H(+). The catalysed reaction is (25R)-cholest-5-en-3beta,7alpha,26-triol + NAD(+) = (25R)-7alpha,26-dihydroxycholest-4-en-3-one + NADH + H(+). The enzyme catalyses (24S)-7alpha-dihydroxycholesterol + NAD(+) = (24S)-7alpha,24-dihydroxycholest-4-en-3-one + NADH + H(+). The protein operates within lipid metabolism; steroid biosynthesis. The 3-beta-HSD enzymatic system plays a crucial role in the biosynthesis of all classes of hormonal steroids. HSD VII is active against four 7-alpha-hydroxylated sterols. Does not metabolize several different C(19/21) steroids as substrates. Involved in bile acid synthesis. Plays a key role in cell positioning and movement in lymphoid tissues by mediating degradation of 7-alpha,25-dihydroxycholesterol (7-alpha,25-OHC): 7-alpha,25-OHC acts as a ligand for the G protein-coupled receptor GPR183/EBI2, a chemotactic receptor for a number of lymphoid cells. The polypeptide is 3 beta-hydroxysteroid dehydrogenase type 7 (Rattus norvegicus (Rat)).